Reading from the N-terminus, the 202-residue chain is Matrix protein (202 aa).

The tract at residues 1-33 is disordered; the sequence is MNILRKIVKNRKDEDTQKPSPASAPPDDDDLWL. A PPXY motif motif is present at residues 35–38; it reads PPEY. The segment at 115-151 is essential for glycoprotein binding; sequence KLRRTLIFQWADSRGPLEGEELEHSQEITWDDDTEFV.

It belongs to the lyssavirus matrix protein family. As to quaternary structure, homomultimer. Interacts with nucleoprotein and with the cytoplasmic domain of glycoprotein. Interacts with host ATP6V1A; this interaction plays an important role in virion uncoating after viral entry.

Its subcellular location is the virion membrane. The protein resides in the host endomembrane system. The protein localises to the host cytoplasm. In terms of biological role, plays a major role in assembly, budding and uncoating of virion after membrane fusion. Completely covers the ribonucleoprotein coil and keep it in condensed bullet-shaped form. Inhibits viral transcription and stimulates replication. Plays a major role in early induction of TRAIL-mediated apoptosis in infected neurons. Inhibits the integrated stress response (ISR) in the infected cell by blocking the formation of stress granules. The chain is Matrix protein (M) from Homo sapiens (Human).